Consider the following 136-residue polypeptide: Large ribosomal subunit protein uL16 (136 aa).

This sequence belongs to the universal ribosomal protein uL16 family. As to quaternary structure, part of the 50S ribosomal subunit.

Its function is as follows. Binds 23S rRNA and is also seen to make contacts with the A and possibly P site tRNAs. The polypeptide is Large ribosomal subunit protein uL16 (Shewanella baltica (strain OS155 / ATCC BAA-1091)).